Consider the following 417-residue polypeptide: MYQPGILGRRKRVCKPWTVALTTTAALLALAVLIGLLVYFLVYEEKTHYYQASFWIPSIKYSSDLSEEQSKLQINLKQKINNEIDVIFQRSSLKHHYVKSQVVNFRPSNDGVKADILIKFQIPRKNADTLRSEADSILNKKLQSSQSFLKRDISLPYLREMNAAQAEHILNSNCGLGMEYPRIARIADGKPAGSNSWPWQSSLQVEGIHLCGASLIGSQWLVTSAHCFDNYKNPKLWTVSFGRTLGNPLTTRKVESIIIHENYAAHKHDDDIAVVKLSSPVLFSENLRTVCLPEATFQVLPKSKVFVTGWGALKANGPFPNSLQEVEIEIISNDVCNQVNVYGGAISSGMICAGFLTGKLDACEGDSGGPLVISDNRNKWYLLGIVSWGIDCGKENKPGIYTRVTHYRNWIKSKTNI.

Residues 1–22 (MYQPGILGRRKRVCKPWTVALT) lie on the Cytoplasmic side of the membrane. The chain crosses the membrane as a helical; Signal-anchor for type II membrane protein span at residues 23–43 (TTAALLALAVLIGLLVYFLVY). Over 44 to 417 (EEKTHYYQAS…RNWIKSKTNI (374 aa)) the chain is Extracellular. In terms of domain architecture, SEA spans 46-165 (KTHYYQASFW…PYLREMNAAQ (120 aa)). Residues 186-416 (IADGKPAGSN…YRNWIKSKTN (231 aa)) enclose the Peptidase S1 domain. An intrachain disulfide couples cysteine 211 to cysteine 227. Active-site charge relay system residues include histidine 226 and aspartate 271. 2 cysteine pairs are disulfide-bonded: cysteine 336–cysteine 352 and cysteine 363–cysteine 392. Catalysis depends on serine 367, which acts as the Charge relay system.

This sequence belongs to the peptidase S1 family. In terms of tissue distribution, highest expression in lung and tongue. Also expressed in brain, colon, heart and liver. Isoform 1 is the predominant form in tongue whereas both isoforms are expressed in similar amounts in lung. At the cellular level, expression is confined to epithelial cells within the cleft of the circumvallate papillae extending into the ducts of the minor salivary glands, the respiratory epithelium of the nasal cavity and tear gland ducts.

It is found in the membrane. This chain is Transmembrane protease serine 11G (Tmprss11g), found in Rattus norvegicus (Rat).